Here is a 682-residue protein sequence, read N- to C-terminus: ATP-dependent zinc metalloprotease FtsH (682 aa).

Over 1–7 (MKQSHKT) the chain is Cytoplasmic. A helical transmembrane segment spans residues 8–28 (ILLWALLIFLFVMIYNLISDG). The Periplasmic portion of the chain corresponds to 29–138 (TSGEETLDTT…YEVKAKEEST (110 aa)). Residues 139–159 (FWQSLLISWLPMLLLFALFFF) traverse the membrane as a helical segment. The Cytoplasmic portion of the chain corresponds to 160–682 (FMRQLQAGGG…SGTDPEPEPA (523 aa)). ATP is bound at residue 232–239 (GPPGTGKT). Histidine 454 is a binding site for Zn(2+). Residue glutamate 455 is part of the active site. Histidine 458 and aspartate 531 together coordinate Zn(2+). Positions 638–682 (LSRPAVVSKPSADAESSVDEDEREARPALFPPLGKSGTDPEPEPA) are disordered.

It in the central section; belongs to the AAA ATPase family. This sequence in the C-terminal section; belongs to the peptidase M41 family. Homohexamer. The cofactor is Zn(2+).

It localises to the cell inner membrane. Functionally, acts as a processive, ATP-dependent zinc metallopeptidase for both cytoplasmic and membrane proteins. Plays a role in the quality control of integral membrane proteins. This is ATP-dependent zinc metalloprotease FtsH from Haliangium ochraceum (strain DSM 14365 / JCM 11303 / SMP-2).